The chain runs to 761 residues: RNA-binding protein 12B (761 aa).

Ser98, Ser101, and Ser112 each carry phosphoserine. Residue Lys114 forms a Glycyl lysine isopeptide (Lys-Gly) (interchain with G-Cter in SUMO2) linkage. Positions 120–147 are disordered; sequence SGYGSSINQDAGFHSNGTGHGNLRPRKT. A Glycyl lysine isopeptide (Lys-Gly) (interchain with G-Cter in SUMO2) cross-link involves residue Lys151. One can recognise an RRM 1 domain in the interval 155–230; sequence PYLFLRGLPY…RFIEVMQGSE (76 aa). Residues 247-262 are compositionally biased toward basic and acidic residues; it reads LRRSEEHSPPRGINDR. Residues 247-278 form a disordered region; the sequence is LRRSEEHSPPRGINDRHFRKRSHSKSPRRTRS. Ser250 and Ser254 each carry phosphoserine. The span at 263–278 shows a compositional bias: basic residues; sequence HFRKRSHSKSPRRTRS. Thr276 is subject to Phosphothreonine. Phosphoserine occurs at positions 278, 280, 292, and 294. Positions 284-360 constitute an RRM 2 domain; sequence FYVHLKNLSL…RPVHIDPISR (77 aa). N6-acetyllysine is present on Lys319. Residue Lys335 forms a Glycyl lysine isopeptide (Lys-Gly) (interchain with G-Cter in SUMO2) linkage. Basic and acidic residues predominate over residues 372–384; it reads KKRSGSPERDRPG. Positions 372–392 are disordered; the sequence is KKRSGSPERDRPGHVSQKYSQ. Ser377 is subject to Phosphoserine. The region spanning 400-477 is the RRM 3 domain; sequence LCIYIRNFPF…TEVLLRLISE (78 aa). Glycyl lysine isopeptide (Lys-Gly) (interchain with G-Cter in SUMO2) cross-links involve residues Lys514 and Lys541. The span at 538–621 shows a compositional bias: basic and acidic residues; the sequence is DNFKHPQRDF…RHPREEDWRR (84 aa). The segment at 538–690 is disordered; the sequence is DNFKHPQRDF…THQMKTSGAL (153 aa). Ser575 and Ser591 each carry phosphoserine. Positions 627–654 are enriched in polar residues; the sequence is LQSTSGGHPQSISGGHPQSISGARPRST. Residues 661–672 show a composition bias toward low complexity; that stretch reads SISGGRLRSISG.

This chain is RNA-binding protein 12B (RBM12B), found in Pongo abelii (Sumatran orangutan).